The chain runs to 238 residues: Uridylate kinase (238 aa).

13 to 16 (KLSG) contributes to the ATP binding site. Residue G53 participates in UMP binding. Residues G54 and R58 each coordinate ATP. UMP is bound by residues D73 and 134-141 (AGLPYFST). ATP contacts are provided by N162, Y168, and D171.

The protein belongs to the UMP kinase family. In terms of assembly, homohexamer.

Its subcellular location is the cytoplasm. It catalyses the reaction UMP + ATP = UDP + ADP. It participates in pyrimidine metabolism; CTP biosynthesis via de novo pathway; UDP from UMP (UMPK route): step 1/1. Its activity is regulated as follows. Inhibited by UTP. Catalyzes the reversible phosphorylation of UMP to UDP. This chain is Uridylate kinase, found in Clavibacter michiganensis subsp. michiganensis (strain NCPPB 382).